The chain runs to 131 residues: Fumarate reductase subunit C (131 aa).

3 helical membrane passes run 30–50 (EGTCLPQLWFSLVVLFGVFAL), 58–78 (AGFVGFLSNPILMLINIVTLI), and 109–129 (IVRGLWGLTIVVTVVILAVAL).

It belongs to the FrdC family. In terms of assembly, part of an enzyme complex containing four subunits: a flavoprotein (FrdA), an iron-sulfur protein (FrdB), and two hydrophobic anchor proteins (FrdC and FrdD).

The protein localises to the cell inner membrane. Functionally, two distinct, membrane-bound, FAD-containing enzymes are responsible for the catalysis of fumarate and succinate interconversion; fumarate reductase is used in anaerobic growth, and succinate dehydrogenase is used in aerobic growth. Anchors the catalytic components of the fumarate reductase complex to the cell inner membrane, binds quinones. The chain is Fumarate reductase subunit C from Proteus vulgaris.